The following is a 377-amino-acid chain: Probable riboflavin import permease protein RfuC (377 aa).

The next 10 helical transmembrane spans lie at 4 to 24 (VINS…VIVL), 49 to 69 (ALFH…CALK), 72 to 92 (MINL…ALLL), 98 to 118 (VGFL…AGIL), 135 to 155 (ITSF…IITV), 182 to 202 (FGVP…GCFF), 223 to 245 (FVGF…LFGL), 249 to 268 (FSVV…GMGY), 274 to 294 (ALIA…FAWM), and 303 to 323 (LGAH…FLLI).

Belongs to the binding-protein-dependent transport system permease family. The complex is probably composed of two ATP-binding proteins (RfuB), two transmembrane proteins (RfuC and RfuD) and a solute-binding protein (RfuA).

It localises to the cell inner membrane. In terms of biological role, probably part of the ABC transporter complex RfuABCD involved in riboflavin import. Probably responsible for the translocation of the substrate across the membrane. The chain is Probable riboflavin import permease protein RfuC from Treponema pallidum (strain Nichols).